The primary structure comprises 441 residues: UDP-N-acetylmuramoylalanine--D-glutamate ligase (441 aa).

Residue 113-119 (GSNAKST) participates in ATP binding.

The protein belongs to the MurCDEF family.

It localises to the cytoplasm. It catalyses the reaction UDP-N-acetyl-alpha-D-muramoyl-L-alanine + D-glutamate + ATP = UDP-N-acetyl-alpha-D-muramoyl-L-alanyl-D-glutamate + ADP + phosphate + H(+). It functions in the pathway cell wall biogenesis; peptidoglycan biosynthesis. Functionally, cell wall formation. Catalyzes the addition of glutamate to the nucleotide precursor UDP-N-acetylmuramoyl-L-alanine (UMA). This chain is UDP-N-acetylmuramoylalanine--D-glutamate ligase, found in Alcanivorax borkumensis (strain ATCC 700651 / DSM 11573 / NCIMB 13689 / SK2).